Consider the following 212-residue polypeptide: Ropporin-1 (212 aa).

The RIIa domain occupies 12 to 49; the sequence is PELPKMLKEFAKAAIRAQPQDLIQWGADYFEALSRGET. Ser-56 is modified (phosphoserine). The segment at 209-212 is interaction with RHPN1; the sequence is VWLE.

This sequence belongs to the ropporin family. In terms of assembly, homodimer. Interacts with AKAP3. May interact with SPA17. Interacts with RHPN1. Interacts with FSCB; the interaction increases upon spermatozoa capacitation conditions. Interacts with CFAP61. Sumoylated, sumoylation decreases upon spermatozoa capacitation conditions.

It localises to the cell projection. The protein localises to the cilium. It is found in the flagellum. Its function is as follows. Important for male fertility. With ROPN1L, involved in fibrous sheath integrity and sperm motility, plays a role in PKA-dependent signaling processes required for spermatozoa capacitation. This chain is Ropporin-1 (ROPN1), found in Macaca fascicularis (Crab-eating macaque).